We begin with the raw amino-acid sequence, 388 residues long: Ribonuclease D (388 aa).

A 3'-5' exonuclease domain is found at 7–173 (ITDSKTLAQF…QIFPKMLEEL (167 aa)). Residues 212–293 (KADVLGRLKA…ASHAPLAKEE (82 aa)) enclose the HRDC domain.

The protein belongs to the RNase D family. A divalent metal cation serves as cofactor.

The protein resides in the cytoplasm. The enzyme catalyses Exonucleolytic cleavage that removes extra residues from the 3'-terminus of tRNA to produce 5'-mononucleotides.. Exonuclease involved in the 3' processing of various precursor tRNAs. Initiates hydrolysis at the 3'-terminus of an RNA molecule and releases 5'-mononucleotides. In Sphingobium indicum (strain DSM 16413 / CCM 7287 / MTCC 6362 / UT26 / NBRC 101211 / UT26S) (Sphingobium japonicum), this protein is Ribonuclease D.